Here is a 660-residue protein sequence, read N- to C-terminus: UPF0603 protein MT2410 (660 aa).

The N-terminal stretch at 1 to 26 is a signal peptide; sequence MRLVRLLGMVLTILAAGLLLGPPAGA. The helical transmembrane segment at 162 to 182 threads the bilayer; the sequence is VVLLVTVGIIVIVVAVLLVVM. The stretch at 488-567 forms a coiled coil; it reads DQLTKVDADL…LEAAHDRKSS (80 aa). Residues 605-625 form a helical membrane-spanning segment; the sequence is GGNNAGAILGGIIIGDLLSGG. Positions 638 to 660 are disordered; the sequence is FGGSSNAPGSSPDGGFLGGGGRF.

It belongs to the UPF0603 family.

It localises to the cell membrane. Functionally, may play a role in septum formation. This is UPF0603 protein MT2410 from Mycobacterium tuberculosis (strain CDC 1551 / Oshkosh).